The following is a 314-amino-acid chain: Tudor-interacting repair regulator protein (314 aa).

A lipid anchor (N-myristoyl glycine) is attached at glycine 2.

It belongs to the Nudix hydrolase family. TIRR subfamily. As to quaternary structure, interacts (via the cytoplasmic part) with syndecan-4 (SDC4), but not with other syndecan proteins. Myristoylated in vitro; additional evidence is however required to confirm myristoylation in vivo. Ubiquitously expressed. Expressed in embryonic brain, eyes, gizzard, heart, intestine, kidney, liver, tibia and skin.

It localises to the nucleus. Its subcellular location is the cytoplasm. The protein resides in the cytoskeleton. The protein localises to the cell membrane. It is found in the cell junction. It localises to the focal adhesion. In terms of biological role, key regulator of TP53BP1 required to stabilize TP53BP1 and regulate its recruitment to chromatin. The sequence is that of Tudor-interacting repair regulator protein (NUDT16L1) from Gallus gallus (Chicken).